The primary structure comprises 154 residues: Deoxyuridine 5'-triphosphate nucleotidohydrolase (154 aa).

Residues 72–74, N85, 89–91, and M99 contribute to the substrate site; these read RSG and LID.

This sequence belongs to the dUTPase family. Mg(2+) serves as cofactor.

It carries out the reaction dUTP + H2O = dUMP + diphosphate + H(+). It participates in pyrimidine metabolism; dUMP biosynthesis; dUMP from dCTP (dUTP route): step 2/2. This enzyme is involved in nucleotide metabolism: it produces dUMP, the immediate precursor of thymidine nucleotides and it decreases the intracellular concentration of dUTP so that uracil cannot be incorporated into DNA. The protein is Deoxyuridine 5'-triphosphate nucleotidohydrolase of Psychrobacter arcticus (strain DSM 17307 / VKM B-2377 / 273-4).